The sequence spans 235 residues: Thiopurine S-methyltransferase (235 aa).

Residues tryptophan 13, leucine 48, glutamate 69, and arginine 126 each coordinate S-adenosyl-L-methionine. A disordered region spans residues 199-235; that stretch reads PDPQNGAPRRVEHKVYQLTGKRPASPEADGRAAETED. Basic and acidic residues predominate over residues 226–235; sequence ADGRAAETED.

Belongs to the class I-like SAM-binding methyltransferase superfamily. TPMT family.

Its subcellular location is the cytoplasm. It carries out the reaction S-adenosyl-L-methionine + a thiopurine = S-adenosyl-L-homocysteine + a thiopurine S-methylether.. The protein is Thiopurine S-methyltransferase of Stutzerimonas stutzeri (strain A1501) (Pseudomonas stutzeri).